The sequence spans 837 residues: Striatin-interacting protein 1 (837 aa).

Met1 is subject to N-acetylmethionine. Residues 1–67 (MEPAAGTPGP…DSEGYSESPD (67 aa)) form a disordered region. Residues 18 to 35 (PQPPPPPPPATAQPPPGA) are compositionally biased toward pro residues. Residues 47-60 (KAREFNRNQRKDSE) show a composition bias toward basic and acidic residues. Phosphoserine occurs at positions 59, 335, and 339. The tract at residues 336–423 (PPASASDLIE…DRLTCPKGLP (88 aa)) is disordered. A compositionally biased stretch (basic and acidic residues) spans 356 to 377 (KALIKQDNLDAFNERDPYKADD). The segment covering 378 to 391 (SREEEEENDDDNSL) has biased composition (acidic residues). Phosphoserine is present on Ser788. The tract at residues 796–837 (DNCLQSVLGQRVDLPEDFQMNYDLWLEREVFSKPISWEELLQ) is required for STRIPAK core complex formation.

This sequence belongs to the STRIP family. Part of the core of STRIPAK complexes composed of PP2A catalytic and scaffolding subunits, the striatins (PP2A regulatory subunits), the striatin-associated proteins MOB4, STRIP1 and STRIP2, PDCD10 and members of the STE20 kinases, such as STK24 and STK26. The STRIPAK complex can be extended by adapter proteins such as SLMAP:SIKE1, CTTNBP2 or CTTNBP2NL. Interacts with CDC42BPB. Interacts with CTTNBP2NL.

Its subcellular location is the cytoplasm. Functionally, plays a role in the regulation of cell morphology and cytoskeletal organization. Required in the cortical actin filament dynamics and cell shape. Part of the striatin-interacting phosphatase and kinase (STRIPAK) complexes. STRIPAK complexes have critical roles in protein (de)phosphorylation and are regulators of multiple signaling pathways including Hippo, MAPK, nuclear receptor and cytoskeleton remodeling. Different types of STRIPAK complexes are involved in a variety of biological processes such as cell growth, differentiation, apoptosis, metabolism and immune regulation. This Bos taurus (Bovine) protein is Striatin-interacting protein 1 (STRIP1).